Consider the following 454-residue polypeptide: UDP-N-acetylmuramate--L-alanine ligase (454 aa).

113 to 119 (GSHGKTT) is a binding site for ATP.

The protein belongs to the MurCDEF family.

It is found in the cytoplasm. It catalyses the reaction UDP-N-acetyl-alpha-D-muramate + L-alanine + ATP = UDP-N-acetyl-alpha-D-muramoyl-L-alanine + ADP + phosphate + H(+). Its pathway is cell wall biogenesis; peptidoglycan biosynthesis. Its function is as follows. Cell wall formation. This chain is UDP-N-acetylmuramate--L-alanine ligase, found in Aquifex aeolicus (strain VF5).